Reading from the N-terminus, the 152-residue chain is MLFFRGINSINMDAKGRLAIPKRYRESIAEASENQLVATIDLHSPCLLIYTMDEWEVIERKLMSLPNMDPQARLVQRLLLGHASEMEMDGQGRVLLPSLLREHAKLEKEAILLGQGNKFELWSQEAWDASRPEMLDSASVGDVSESLSSLSL.

SpoVT-AbrB domains lie at 7–54 (INSI…TMDE) and 83–126 (ASEM…SQEA).

This sequence belongs to the MraZ family. As to quaternary structure, forms oligomers.

The protein localises to the cytoplasm. Its subcellular location is the nucleoid. The protein is Transcriptional regulator MraZ of Hydrogenovibrio crunogenus (strain DSM 25203 / XCL-2) (Thiomicrospira crunogena).